The sequence spans 249 residues: tRNA pseudouridine synthase A (249 aa).

Asp-53 serves as the catalytic Nucleophile. Tyr-111 provides a ligand contact to substrate.

The protein belongs to the tRNA pseudouridine synthase TruA family. In terms of assembly, homodimer.

The enzyme catalyses uridine(38/39/40) in tRNA = pseudouridine(38/39/40) in tRNA. Functionally, formation of pseudouridine at positions 38, 39 and 40 in the anticodon stem and loop of transfer RNAs. This chain is tRNA pseudouridine synthase A, found in Streptococcus pneumoniae (strain 70585).